Reading from the N-terminus, the 434-residue chain is MDDQSRMLQTLAGVNLAGHSVQGGMALPPPPHGHEGADGDGRKQDIGDILHQIMTITDQSLDEAQAKKHALNCHRMKPALFSVLCEIKEKTGLSIRGAQEEDPPDPQLMRLDNMLLAEGVSGPEKGGGSAAAAAAAAASGGSSDNSIEHSDYRAKLTQIRQIYHTELEKYEQACNEFTTHVMNLLREQSRTRPISPKEIERMVGIIHRKFSSIQMQLKQSTCEAVMILRSRFLDARRKRRNFSKQATEILNEYFYSHLSNPYPSEEAKEELAKKCSITVSQVSNWFGNKRIRYKKNIGKFQEEANLYAAKTAVTAAHAVAAAVQNNQTNSPTTPNSGSSGSFNLPNSGDMFMNMQSLNGDSYQGSQVGANVQSQVDTLRHVINQTGGYSDGLGGNSLYSPHNLNANGGWQDATTPSSVTSPTEGPGSVHSDTSN.

Residues 20 to 41 (SVQGGMALPPPPHGHEGADGDG) form a disordered region. The span at 32-41 (HGHEGADGDG) shows a compositional bias: basic and acidic residues. A PBC domain is found at 41 to 234 (GRKQDIGDIL…VMILRSRFLD (194 aa)). The PBC-A stretch occupies residues 48–127 (DILHQIMTIT…EGVSGPEKGG (80 aa)). The PBC-B stretch occupies residues 130-234 (AAAAAAAAAS…VMILRSRFLD (105 aa)). A DNA-binding region (homeobox; TALE-type) is located at residues 235–297 (ARRKRRNFSK…NKRIRYKKNI (63 aa)). Positions 326 to 341 (NQTNSPTTPNSGSSGS) are enriched in low complexity. 2 disordered regions span residues 326–349 (NQTNSPTTPNSGSSGSFNLPNSGD) and 403–434 (LNANGGWQDATTPSSVTSPTEGPGSVHSDTSN). Residues 403-422 (LNANGGWQDATTPSSVTSPT) show a composition bias toward polar residues.

Belongs to the TALE/PBX homeobox family. In terms of assembly, interacts with PBXIP1. As to expression, ubiquitously expressed.

Its subcellular location is the nucleus. In terms of biological role, transcriptional activator that binds the sequence 5'-ATCAATCAA-3'. This Homo sapiens (Human) protein is Pre-B-cell leukemia transcription factor 3 (PBX3).